We begin with the raw amino-acid sequence, 141 residues long: Hemoglobin subunit alpha-D (141 aa).

The Globin domain maps to 1–141 (MLNAEDKKLI…VSAVLAEKYR (141 aa)). Positions 58 and 87 each coordinate heme b.

It belongs to the globin family. In terms of assembly, heterotetramer of two alpha-D chains and two beta chains. As to expression, red blood cells.

Functionally, involved in oxygen transport from the lung to the various peripheral tissues. This chain is Hemoglobin subunit alpha-D (HBAD), found in Phasianus colchicus colchicus (Black-necked pheasant).